The chain runs to 294 residues: Indole-3-glycerol phosphate synthase (294 aa).

The protein belongs to the TrpC family.

It catalyses the reaction 1-(2-carboxyphenylamino)-1-deoxy-D-ribulose 5-phosphate + H(+) = (1S,2R)-1-C-(indol-3-yl)glycerol 3-phosphate + CO2 + H2O. It participates in amino-acid biosynthesis; L-tryptophan biosynthesis; L-tryptophan from chorismate: step 4/5. In Synechococcus sp. (strain CC9902), this protein is Indole-3-glycerol phosphate synthase.